The sequence spans 141 residues: Large ribosomal subunit protein uL11c (141 aa).

It belongs to the universal ribosomal protein uL11 family. As to quaternary structure, part of the ribosomal stalk of the 50S ribosomal subunit. Interacts with L10 and the large rRNA to form the base of the stalk. L10 forms an elongated spine to which L12 dimers bind in a sequential fashion forming a multimeric L10(L12)X complex.

Its subcellular location is the plastid. The protein localises to the chloroplast. Functionally, forms part of the ribosomal stalk which helps the ribosome interact with GTP-bound translation factors. The polypeptide is Large ribosomal subunit protein uL11c (Trieres chinensis (Marine centric diatom)).